The sequence spans 141 residues: MNEDALEAVRSRTFFAILTVFYSIFRCCLAYCNKGDDDHLIHPSHSLHVIKATGINPSVLLSIPVVSFNANAFKDNIECVVCLSKFIDEDKARVLPSCNHCFHFDFTDTWLHSDYTCPNCRKNVEEIQNHELSLSPNPNSG.

The helical transmembrane segment at 14-32 (FFAILTVFYSIFRCCLAYC) threads the bilayer. Residues 79–121 (CVVCLSKFIDEDKARVLPSCNHCFHFDFTDTWLHSDYTCPNCR) form an RING-type; degenerate zinc finger.

The protein belongs to the RING-type zinc finger family. ATL subfamily.

The protein localises to the membrane. It catalyses the reaction S-ubiquitinyl-[E2 ubiquitin-conjugating enzyme]-L-cysteine + [acceptor protein]-L-lysine = [E2 ubiquitin-conjugating enzyme]-L-cysteine + N(6)-ubiquitinyl-[acceptor protein]-L-lysine.. It participates in protein modification; protein ubiquitination. This Arabidopsis thaliana (Mouse-ear cress) protein is Putative RING-H2 finger protein ATL62 (ATL62).